Reading from the N-terminus, the 322-residue chain is Putative nickel/cobalt efflux system HI_1248 (322 aa).

6 helical membrane passes run 7 to 27 (GLVL…WFFL), 54 to 74 (AGTT…LGPG), 100 to 120 (LSSL…VVVL), 137 to 157 (TALL…LRAY), 228 to 248 (IFVL…LAVL), and 294 to 314 (LIAG…TTIS).

Belongs to the NiCoT transporter (TC 2.A.52) family.

The protein resides in the cell membrane. In terms of biological role, efflux system for nickel and cobalt. This chain is Putative nickel/cobalt efflux system HI_1248, found in Haemophilus influenzae (strain ATCC 51907 / DSM 11121 / KW20 / Rd).